Consider the following 333-residue polypeptide: Ferrochelatase (333 aa).

Fe cation-binding residues include His202 and Glu284.

The protein belongs to the ferrochelatase family.

It localises to the cytoplasm. The catalysed reaction is heme b + 2 H(+) = protoporphyrin IX + Fe(2+). It functions in the pathway porphyrin-containing compound metabolism; protoheme biosynthesis; protoheme from protoporphyrin-IX: step 1/1. Functionally, catalyzes the ferrous insertion into protoporphyrin IX. In Francisella tularensis subsp. tularensis (strain FSC 198), this protein is Ferrochelatase.